Reading from the N-terminus, the 503-residue chain is Probable DNA ligase (503 aa).

Position 210 (glutamate 210) interacts with ATP. Lysine 212 functions as the N6-AMP-lysine intermediate in the catalytic mechanism. The ATP site is built by arginine 217, arginine 232, glutamate 261, phenylalanine 296, arginine 367, and lysine 373.

This sequence belongs to the ATP-dependent DNA ligase family. The cofactor is Mg(2+).

The enzyme catalyses ATP + (deoxyribonucleotide)n-3'-hydroxyl + 5'-phospho-(deoxyribonucleotide)m = (deoxyribonucleotide)n+m + AMP + diphosphate.. DNA ligase that seals nicks in double-stranded DNA during DNA replication, DNA recombination and DNA repair. This is Probable DNA ligase from Rhodococcus jostii (strain RHA1).